The primary structure comprises 309 residues: 2-dehydro-3-deoxygluconokinase (309 aa).

Substrate contacts are provided by residues 34–38 (GAEVN), Tyr-89, 103–105 (YYR), and Arg-167. Residues 165–167 (NYR), Ser-193, 219–225 (KRGAKGA), 248–251 (GAGD), and Asn-275 each bind ATP. A substrate-binding site is contributed by Asp-251. The Proton acceptor role is filled by Asp-251. Residue Asp-287 coordinates substrate.

It belongs to the carbohydrate kinase pfkB family. As to quaternary structure, homohexamer; trimer of dimers.

The catalysed reaction is 2-dehydro-3-deoxy-D-gluconate + ATP = 2-dehydro-3-deoxy-6-phospho-D-gluconate + ADP + H(+). It functions in the pathway carbohydrate acid metabolism; 2-dehydro-3-deoxy-D-gluconate degradation; D-glyceraldehyde 3-phosphate and pyruvate from 2-dehydro-3-deoxy-D-gluconate: step 1/2. Functionally, involved in the degradation of glucose via the semi-phosphorylative Entner-Doudoroff pathway. Catalyzes the phosphorylation of 2-keto-3-deoxygluconate (KDG) to produce 2-keto-3-deoxy-6-phosphogluconate (KDPG). This chain is 2-dehydro-3-deoxygluconokinase (kdgK), found in Thermus thermophilus (strain ATCC 27634 / DSM 579 / HB8).